The primary structure comprises 294 residues: Thymidylate synthase (294 aa).

DUMP-binding positions include Arg31 and 156–157 (RR). Residue Cys176 is the Nucleophile of the active site. DUMP-binding positions include 196-199 (RSAD), Asn207, and 237-239 (HIY). Asp199 serves as a coordination point for (6R)-5,10-methylene-5,6,7,8-tetrahydrofolate. Ala293 contacts (6R)-5,10-methylene-5,6,7,8-tetrahydrofolate.

It belongs to the thymidylate synthase family. As to quaternary structure, homodimer.

It carries out the reaction dUMP + (6R)-5,10-methylene-5,6,7,8-tetrahydrofolate = 7,8-dihydrofolate + dTMP. It functions in the pathway pyrimidine metabolism; dTTP biosynthesis. The chain is Thymidylate synthase (70) from Saimiri sciureus (Common squirrel monkey).